The chain runs to 462 residues: Arginine biosynthesis bifunctional protein ArgJ, mitochondrial (462 aa).

Positions 200, 228, 239, 326, 457, and 462 each coordinate substrate. Residue Thr239 is the Nucleophile of the active site.

Belongs to the ArgJ family. In terms of assembly, heterodimer of an alpha and a beta chain. Post-translationally, the alpha and beta chains are autoproteolytically processed from a single precursor protein within the mitochondrion.

It is found in the mitochondrion matrix. The enzyme catalyses N(2)-acetyl-L-ornithine + L-glutamate = N-acetyl-L-glutamate + L-ornithine. It carries out the reaction L-glutamate + acetyl-CoA = N-acetyl-L-glutamate + CoA + H(+). It functions in the pathway amino-acid biosynthesis; L-arginine biosynthesis; L-ornithine and N-acetyl-L-glutamate from L-glutamate and N(2)-acetyl-L-ornithine (cyclic): step 1/1. Its pathway is amino-acid biosynthesis; L-arginine biosynthesis; N(2)-acetyl-L-ornithine from L-glutamate: step 1/4. Functionally, catalyzes two activities which are involved in the cyclic version of arginine biosynthesis: the synthesis of acetylglutamate from glutamate and acetyl-CoA, and of ornithine by transacetylation between acetylornithine and glutamate. The sequence is that of Arginine biosynthesis bifunctional protein ArgJ, mitochondrial from Pyrenophora tritici-repentis (strain Pt-1C-BFP) (Wheat tan spot fungus).